Consider the following 673-residue polypeptide: Hemocyanin subunit C (673 aa).

Residues 1–20 form the signal peptide; sequence MGAWKVWTFFAIALVVAVKA. Residues His-207, His-211, and His-237 each coordinate Cu cation. N-linked (GlcNAc...) asparagine glycosylation occurs at Asn-323. The Cu cation site is built by His-358, His-362, and His-398. Residues Cys-568 and Cys-616 are joined by a disulfide bond.

It belongs to the tyrosinase family. Hemocyanin subfamily. As to quaternary structure, 36-chain polymer consisting of 6 hexamers, each of which includes 4 different chains, A, B, C and D. As to expression, hemolymph.

It localises to the secreted. The protein localises to the extracellular space. Hemocyanins are copper-containing oxygen carriers occurring freely dissolved in the hemolymph of many mollusks and arthropods. The chain is Hemocyanin subunit C (HCC) from Scutigera coleoptrata (House centipede).